A 257-amino-acid polypeptide reads, in one-letter code: High affinity immunoglobulin epsilon receptor subunit alpha (257 aa).

The first 25 residues, 1–25 (MAPAMESPTLLCVALLFFAPDGVLA), serve as a signal peptide directing secretion. Over 26–205 (VPQKPKVSLN…KAPREKYWLQ (180 aa)) the chain is Extracellular. 2 consecutive Ig-like domains span residues 30–110 (PKVS…EVFS) and 111–193 (DWLL…LNIT). 7 N-linked (GlcNAc...) asparagine glycosylation sites follow: N46, N67, N75, N99, N160, N165, and N191. A disulfide bond links C51 and C93. C132 and C176 are oxidised to a cystine. The helical transmembrane segment at 206–224 (FFIPLLVVILFAVDTGLFI) threads the bilayer. The Cytoplasmic segment spans residues 225–257 (STQQQVTFLLKIKRTRKGFRLLNPHPKPNPKNN).

Tetramer of an alpha chain, a beta chain, and two disulfide linked gamma chains. Interacts with IGHE (via CH3 region). In terms of tissue distribution, expressed in eosinophils.

It localises to the cell membrane. In terms of biological role, high-affinity receptor for immunoglobulin epsilon/IgE. Mediates IgE effector functions in myeloid cells. Upon IgE binding and antigen/allergen cross-linking initiates signaling pathways that lead to myeloid cell activation and differentiation. On mast cells, basophils and eosinophils stimulates the secretion of vasoactive amines, lipid mediators and cytokines that contribute to inflammatory response, tissue remodeling and cytotoxicity against microbes. Triggers the immediate hypersensitivity response to allergens as a host defense mechanism against helminth parasites, pathogenic bacteria and venom toxicity. When dysregulated, it can elicit harmful life-threatening allergic and anaphylactic reactions. The chain is High affinity immunoglobulin epsilon receptor subunit alpha (FCER1A) from Homo sapiens (Human).